Consider the following 289-residue polypeptide: Polyisoprenoid diphosphate/phosphate phosphohydrolase PLPP6 (289 aa).

The tract at residues 1-81 is disordered; that stretch reads MQSPRRNAEG…SSQALPPQLP (81 aa). The Cytoplasmic portion of the chain corresponds to 1-126; it reads MQSPRRNAEG…ESSSWGSMRP (126 aa). 3 positions are modified to phosphoserine: S23, S30, and S64. A helical transmembrane segment spans residues 127 to 147; that stretch reads LMKLLEISGHGIPWLLGTLYC. Topologically, residues 148–158 are lumenal; the sequence is LSRSDSWAGRE. Residues 159–179 traverse the membrane as a helical segment; sequence VLMNLLFALLLDLLLVSLIKG. A phosphatase sequence motif I region spans residues 178–186; it reads KGLVRRRRP. Over 180–222 the chain is Cytoplasmic; the sequence is LVRRRRPAHNQMDMFFTISVDKYSFPSGHTTRAALVSRFILNH. The tract at residues 205 to 208 is phosphatase sequence motif II; it reads PSGH. H208 serves as the catalytic Proton donors. Residues 223–243 form a helical membrane-spanning segment; sequence LVLAIPLRVLVVLWAFILGLS. The phosphatase sequence motif III stretch occupies residues 243–254; that stretch reads SRVMLGRHNVTD. Residues 244–254 are Lumenal-facing; it reads RVMLGRHNVTD. The active-site Nucleophile is H250. Residues 255–275 form a helical membrane-spanning segment; the sequence is VAFGFFLGYMQYSIVDYCWLS. Residues 276–289 are Cytoplasmic-facing; it reads PRTAPVLFVLWNQP.

This sequence belongs to the PA-phosphatase related phosphoesterase family. Phosphorylation by PKC activates the phosphatase activity towards presqualene diphosphate.

Its subcellular location is the endoplasmic reticulum membrane. The protein resides in the nucleus envelope. It is found in the nucleus inner membrane. The catalysed reaction is presqualene diphosphate + H2O = presqualene phosphate + phosphate + H(+). The enzyme catalyses presqualene phosphate + H2O = presqualene alcohol + phosphate. It catalyses the reaction (2E,6E)-farnesyl diphosphate + H2O = (2E,6E)-farnesyl phosphate + phosphate + H(+). It carries out the reaction (2E,6E)-farnesyl phosphate + H2O = (2E,6E)-farnesol + phosphate. The catalysed reaction is (2E,6E,10E)-geranylgeranyl diphosphate + H2O = (2E,6E,10E)-geranylgeranyl phosphate + phosphate + H(+). The enzyme catalyses (2E,6E,10E)-geranylgeranyl phosphate + H2O = (2E,6E,10E)-geranylgeraniol + phosphate. It catalyses the reaction (2E)-geranyl diphosphate + H2O = (2E)-geranyl phosphate + phosphate + H(+). It carries out the reaction (2E)-geranyl phosphate + H2O = (2E)-geraniol + phosphate. The catalysed reaction is 1,2-dihexadecanoyl-sn-glycero-3-phosphate + H2O = 1,2-dihexadecanoyl-sn-glycerol + phosphate. Magnesium-independent polyisoprenoid diphosphatase that catalyzes the sequential dephosphorylation of presqualene, farnesyl, geranyl and geranylgeranyl diphosphates. Functions in the innate immune response through the dephosphorylation of presqualene diphosphate which acts as a potent inhibitor of the signaling pathways contributing to polymorphonuclear neutrophils activation. May regulate the biosynthesis of cholesterol and related sterols by dephosphorylating presqualene and farnesyl diphosphate, two key intermediates in this biosynthetic pathway. May also play a role in protein prenylation by acting on farnesyl diphosphate and its derivative geranylgeranyl diphosphate, two precursors for the addition of isoprenoid anchors to membrane proteins. Has a lower activity towards phosphatidic acid (PA), but through phosphatidic acid dephosphorylation may participate in the biosynthesis of phospholipids and triacylglycerols. May also act on ceramide-1-P, lysophosphatidic acid (LPA) and sphing-4-enine 1-phosphate/sphingosine-1-phosphate. This Bos taurus (Bovine) protein is Polyisoprenoid diphosphate/phosphate phosphohydrolase PLPP6.